The following is a 217-amino-acid chain: Carboxylesterase Culp1 (217 aa).

The signal sequence occupies residues Met-1–Ala-32. Cys-35 and Cys-107 are disulfide-bonded. The active-site Nucleophile is the Ser-118. A disulfide bridge links Cys-177 with Cys-184. The active site involves Asp-181. His-193 acts as the Proton donor/acceptor in catalysis.

It belongs to the cutinase family.

Its subcellular location is the secreted. It carries out the reaction a fatty acid ester + H2O = an aliphatic alcohol + a fatty acid + H(+). Shows esterase activity, with a preference for short- and medium-chain fatty acids. In Mycobacterium bovis (strain ATCC BAA-935 / AF2122/97), this protein is Carboxylesterase Culp1.